A 527-amino-acid chain; its full sequence is Metal transporter Nramp6 (527 aa).

12 helical membrane-spanning segments follow: residues 38-58 (FFSY…PGNF), 71-91 (ELLW…SLAA), 115-135 (FMLW…EVIG), 143-163 (LFNI…LILL), 173-193 (LEFL…VELH), 221-241 (ISLL…ALVL), 264-284 (GLAL…SGAV), 321-341 (LFAI…TYAG), 364-384 (CLAI…GAGK), 385-405 (LIII…VPLL), 427-447 (TWII…SSFI), and 458-478 (VAIV…LAAI).

Belongs to the NRAMP (TC 2.A.55) family. In terms of tissue distribution, expressed in the vascular bundles of shoots, cotyledons, young leaves, sepals and petals, at the top of the flower stem and in the style. Expressed in the peduncle of developing siliques as well as in the septum and the funiculi.

The protein resides in the endomembrane system. Functionally, probable intracellular cadmium (Cd) transporter that participates in the distribution or availability of Cd within the cell. The chain is Metal transporter Nramp6 (NRAMP6) from Arabidopsis thaliana (Mouse-ear cress).